A 437-amino-acid polypeptide reads, in one-letter code: Enolase (437 aa).

2 residues coordinate substrate: H160 and E169. E212 serves as the catalytic Proton donor. Residues D247, E296, and D321 each contribute to the Mg(2+) site. Substrate-binding residues include E296 and D321. K346 (proton acceptor) is an active-site residue. Substrate contacts are provided by residues S373 to S376 and K397.

It belongs to the enolase family. Homodimer. Mg(2+) serves as cofactor.

It is found in the cytoplasm. It carries out the reaction (2R)-2-phosphoglycerate = phosphoenolpyruvate + H2O. Its pathway is carbohydrate degradation; glycolysis; pyruvate from D-glyceraldehyde 3-phosphate: step 4/5. This chain is Enolase (ENO), found in Eremothecium gossypii (strain ATCC 10895 / CBS 109.51 / FGSC 9923 / NRRL Y-1056) (Yeast).